A 252-amino-acid polypeptide reads, in one-letter code: Intraflagellar transport associated protein 2 (252 aa).

Residues 35 to 42 (GPPKAGKT) and 118 to 125 (WDVSGDKK) each bind GTP.

It belongs to the small GTPase superfamily. Rab family. As to quaternary structure, component of the IFT complex B composed of at least che-2, che-13, dyf-1, dyf-3, dyf-6, dyf-11, dyf-13, ift-20, ift-74, ift-81, ifta-2, osm-1, osm-5 and osm-6. In terms of tissue distribution, ciliated sensory neurons.

The protein localises to the cytoplasm. Its subcellular location is the cytoskeleton. It localises to the cilium axoneme. Its function is as follows. Component of the intraflagellar transport (IFT) complex B required for transport of proteins in the motile cilium. May be required for ciliary entrance and transport of specific ciliary cargo proteins such as che-3 which are related to motility. Regulates specific signaling activities in the cilia, such as the daf-2/insulin receptor-like transduction pathway. In Caenorhabditis elegans, this protein is Intraflagellar transport associated protein 2.